The chain runs to 270 residues: Interleukin-1 alpha (270 aa).

Residues 1–112 (MAKVPDLFED…DTEEEIIKPR (112 aa)) constitute a propeptide that is removed on maturation. An N6-acetyllysine modification is found at lysine 82. The segment at 82–86 (KKRRL) is nuclear localization signal (NLS). The residue at position 87 (serine 87) is a Phosphoserine. N-linked (GlcNAc...) asparagine glycosylation is found at asparagine 102 and asparagine 141.

Belongs to the IL-1 family. In terms of assembly, monomer. Interacts with TMED10; the interaction mediates the translocation from the cytoplasm into the ERGIC (endoplasmic reticulum-Golgi intermediate compartment) and thereby secretion. Interacts with IL1R1. Interacts with S100A13; this interaction is the first step in the export of IL1A, followed by direct translocation of this complex across the plasma membrane. In terms of processing, acetylated within its nuclear localization sequence, which impacts subcellular localization. Proteolytic processed by CAPN1 in a calcium-dependent manner. Cleavage from 31 kDa precursor to 18 kDa biologically active molecules. Post-translationally, phosphorylated. Phosphorylation greatly enhances susceptibility to digestion and promotes the conversion of pre-IL1A alpha to the biologically active IL1A.

Its subcellular location is the nucleus. It is found in the cytoplasm. The protein localises to the secreted. Its function is as follows. Cytokine constitutively present intracellularly in nearly all resting non-hematopoietic cells that plays an important role in inflammation and bridges the innate and adaptive immune systems. After binding to its receptor IL1R1 together with its accessory protein IL1RAP, forms the high affinity interleukin-1 receptor complex. Signaling involves the recruitment of adapter molecules such as MYD88, IRAK1 or IRAK4. In turn, mediates the activation of NF-kappa-B and the three MAPK pathways p38, p42/p44 and JNK pathways. Within the cell, acts as an alarmin and cell death results in its liberation in the extracellular space after disruption of the cell membrane to induce inflammation and alert the host to injury or damage. In addition to its role as a danger signal, which occurs when the cytokine is passively released by cell necrosis, directly senses DNA damage and acts as signal for genotoxic stress without loss of cell integrity. The chain is Interleukin-1 alpha (IL1A) from Sus scrofa (Pig).